Consider the following 321-residue polypeptide: Probable ATP-dependent 6-phosphofructokinase (321 aa).

ATP-binding positions include Gly20 and Arg82–Phe83. Residues Thr136–Asp138, Met180–Arg182, Glu235, Arg259, and Tyr265–Arg268 each bind substrate. The Proton acceptor role is filled by Asp138.

The protein belongs to the phosphofructokinase type A (PFKA) family. In terms of assembly, homotetramer. Requires Mg(2+) as cofactor.

It localises to the cytoplasm. It catalyses the reaction beta-D-fructose 6-phosphate + ATP = beta-D-fructose 1,6-bisphosphate + ADP + H(+). It functions in the pathway carbohydrate degradation; glycolysis; D-glyceraldehyde 3-phosphate and glycerone phosphate from D-glucose: step 3/4. Catalyzes the phosphorylation of D-fructose 6-phosphate to fructose 1,6-bisphosphate by ATP, the first committing step of glycolysis. The polypeptide is Probable ATP-dependent 6-phosphofructokinase (pfkA) (Ureaplasma parvum serovar 3 (strain ATCC 700970)).